Consider the following 280-residue polypeptide: Meiotic driver wtf35 (280 aa).

The segment covering 1 to 29 (MKNKDYPLRTSMDELSTKNDNEIDLEKGP) has biased composition (basic and acidic residues). 2 disordered regions span residues 1-49 (MKNK…DLNN) and 64-100 (NKST…GTTD). Helical transmembrane passes span 105 to 125 (FLIK…PAVC), 142 to 162 (WTLI…SWYF), 184 to 204 (IPMA…PRVA), and 218 to 238 (SLAD…VETV).

The protein belongs to the WTF family. Homomer. Forms protein aggregates. The two isoforms can interact with each other and with themselves. High sequence similarity is required for their interaction.

It localises to the spore membrane. The protein localises to the vacuole membrane. Its subcellular location is the ascus epiplasm. The protein resides in the cytoplasm. It is found in the endoplasmic reticulum membrane. Its function is as follows. Promotes unequal transmission of alleles from the parental zygote to progeny spores by acting as poison/antidote system where the poison and antidote proteins are produced from the same locus; the poison component is trans-acting and targets all spores within an ascus whereas the antidote component is spore-specific, leading to poisoning of all progeny that do not inherit the allele. In terms of biological role, localizes isoform 2 to the vacuole thereby facilitating its degradation. Forms toxic aggregates that disrupt spore maturation. The protein is Meiotic driver wtf35 of Schizosaccharomyces pombe (Fission yeast).